We begin with the raw amino-acid sequence, 160 residues long: Transcription antitermination protein NusB (160 aa).

It belongs to the NusB family.

Functionally, involved in transcription antitermination. Required for transcription of ribosomal RNA (rRNA) genes. Binds specifically to the boxA antiterminator sequence of the ribosomal RNA (rrn) operons. This chain is Transcription antitermination protein NusB, found in Rhizobium rhizogenes (strain K84 / ATCC BAA-868) (Agrobacterium radiobacter).